A 451-amino-acid polypeptide reads, in one-letter code: Acetylornithine aminotransferase, mitochondrial (451 aa).

N6-(pyridoxal phosphate)lysine is present on lysine 302.

It belongs to the class-III pyridoxal-phosphate-dependent aminotransferase family. Pyridoxal 5'-phosphate is required as a cofactor. Found at highest levels in nodules, confined to the infected cells.

Its subcellular location is the mitochondrion. The enzyme catalyses N(2)-acetyl-L-ornithine + 2-oxoglutarate = N-acetyl-L-glutamate 5-semialdehyde + L-glutamate. The protein operates within amino-acid biosynthesis; L-arginine biosynthesis; N(2)-acetyl-L-ornithine from L-glutamate: step 4/4. Functionally, involved in the biosynthesis of citrulline. This chain is Acetylornithine aminotransferase, mitochondrial (AG118), found in Alnus glutinosa (European alder).